The primary structure comprises 173 residues: Globin-like host-protective antigen (173 aa).

The first 15 residues, 1–15 (MRFLLLAAFVAYAYA), serve as a signal peptide directing secretion. The Globin domain occupies 25-166 (ALSALDVVPL…FNDEAQKQLA (142 aa)). His114 contacts heme b.

It belongs to the globin family.

Its subcellular location is the secreted. The protein resides in the extracellular space. In terms of biological role, may be a globin and may play a role in oxygen transport. This chain is Globin-like host-protective antigen, found in Trichostrongylus colubriformis (Black scour worm).